Here is a 334-residue protein sequence, read N- to C-terminus: N-acetyl-gamma-glutamyl-phosphate reductase (334 aa).

Residue cysteine 142 is part of the active site.

This sequence belongs to the NAGSA dehydrogenase family. Type 1 subfamily.

The protein resides in the cytoplasm. The catalysed reaction is N-acetyl-L-glutamate 5-semialdehyde + phosphate + NADP(+) = N-acetyl-L-glutamyl 5-phosphate + NADPH + H(+). The protein operates within amino-acid biosynthesis; L-arginine biosynthesis; N(2)-acetyl-L-ornithine from L-glutamate: step 3/4. Catalyzes the NADPH-dependent reduction of N-acetyl-5-glutamyl phosphate to yield N-acetyl-L-glutamate 5-semialdehyde. In Pelodictyon phaeoclathratiforme (strain DSM 5477 / BU-1), this protein is N-acetyl-gamma-glutamyl-phosphate reductase.